The sequence spans 351 residues: Transaldolase (351 aa).

Lysine 138 serves as the catalytic Schiff-base intermediate with substrate.

It belongs to the transaldolase family. Type 2 subfamily.

The protein resides in the cytoplasm. It carries out the reaction D-sedoheptulose 7-phosphate + D-glyceraldehyde 3-phosphate = D-erythrose 4-phosphate + beta-D-fructose 6-phosphate. The protein operates within carbohydrate degradation; pentose phosphate pathway; D-glyceraldehyde 3-phosphate and beta-D-fructose 6-phosphate from D-ribose 5-phosphate and D-xylulose 5-phosphate (non-oxidative stage): step 2/3. Its function is as follows. Transaldolase is important for the balance of metabolites in the pentose-phosphate pathway. The sequence is that of Transaldolase (tal) from Neisseria meningitidis serogroup A / serotype 4A (strain DSM 15465 / Z2491).